A 203-amino-acid chain; its full sequence is NADH-quinone oxidoreductase subunit C (203 aa).

This sequence belongs to the complex I 30 kDa subunit family. In terms of assembly, NDH-1 is composed of 14 different subunits. Subunits NuoB, C, D, E, F, and G constitute the peripheral sector of the complex.

It is found in the cell inner membrane. It carries out the reaction a quinone + NADH + 5 H(+)(in) = a quinol + NAD(+) + 4 H(+)(out). Functionally, NDH-1 shuttles electrons from NADH, via FMN and iron-sulfur (Fe-S) centers, to quinones in the respiratory chain. The immediate electron acceptor for the enzyme in this species is believed to be ubiquinone. Couples the redox reaction to proton translocation (for every two electrons transferred, four hydrogen ions are translocated across the cytoplasmic membrane), and thus conserves the redox energy in a proton gradient. This Methylibium petroleiphilum (strain ATCC BAA-1232 / LMG 22953 / PM1) protein is NADH-quinone oxidoreductase subunit C.